Here is a 200-residue protein sequence, read N- to C-terminus: Recombination protein RecR (200 aa).

A C4-type zinc finger spans residues 58 to 73 (CSLCCNLTDEDPCSIC). One can recognise a Toprim domain in the interval 81 to 176 (NLLCVVEEPR…KVTRIAHGIP (96 aa)).

The protein belongs to the RecR family.

Functionally, may play a role in DNA repair. It seems to be involved in an RecBC-independent recombinational process of DNA repair. It may act with RecF and RecO. The polypeptide is Recombination protein RecR (Desulforamulus reducens (strain ATCC BAA-1160 / DSM 100696 / MI-1) (Desulfotomaculum reducens)).